The following is a 310-amino-acid chain: Solute carrier family 25 member 47 (310 aa).

3 Solcar repeats span residues 1 to 80 (MDFV…CLAH), 93 to 208 (PTKA…LCEW), and 217 to 304 (PDVL…VLRL). 6 helical membrane passes run 3–23 (FVAGAIGGVCGVAVGYPLDTV), 55–75 (GLSLPVCTVSLVSSVSFGTYH), 98–114 (ITLSGCASGLVRVFLTS), 194–210 (SFATYFLSYAMLCEWLT), 219–239 (VLGVLVAGGCAGVLAWAVATP), and 280–298 (LALNCCRAFPVNMVVFVAY).

This sequence belongs to the mitochondrial carrier (TC 2.A.29) family. As to expression, specifically expressed in liver (at protein level).

It localises to the mitochondrion inner membrane. It is found in the mitochondrion outer membrane. The catalysed reaction is NAD(+)(in) = NAD(+)(out). It carries out the reaction acetyl-CoA(in) = acetyl-CoA(out). Mitochondrial NAD(+) transporter that acts as a 'metabolic gate' in hepatic lipogenesis. Provides NAD(+) substrate to mitochondrial SIRT3 deacetylase and enables its NAD(+)-dependent activities in mitochondrial energy metabolism. This triggers downstream activation of PRKAA1/AMPK-alpha signaling cascade that negatively regulates sterol regulatory element-binding protein (SREBP) transcriptional activities and ATP-consuming lipogenesis to restore cellular energy balance. May transport other mitochondrial metabolites having an aromatic nucleotide and phosphate groups, such as acetyl-CoA. Does not transport amino acids. The transport mechanism remains to be elucidated. The protein is Solute carrier family 25 member 47 of Mus musculus (Mouse).